A 119-amino-acid polypeptide reads, in one-letter code: Large ribosomal subunit protein uL22 (119 aa).

The protein belongs to the universal ribosomal protein uL22 family. In terms of assembly, part of the 50S ribosomal subunit.

This protein binds specifically to 23S rRNA; its binding is stimulated by other ribosomal proteins, e.g. L4, L17, and L20. It is important during the early stages of 50S assembly. It makes multiple contacts with different domains of the 23S rRNA in the assembled 50S subunit and ribosome. In terms of biological role, the globular domain of the protein is located near the polypeptide exit tunnel on the outside of the subunit, while an extended beta-hairpin is found that lines the wall of the exit tunnel in the center of the 70S ribosome. The protein is Large ribosomal subunit protein uL22 of Rickettsia felis (strain ATCC VR-1525 / URRWXCal2) (Rickettsia azadi).